The primary structure comprises 571 residues: OTU domain-containing protein 5 (571 aa).

Disordered stretches follow at residues 1 to 111 and 146 to 175; these read MTIL…GPGG and PGHS…GAGY. Over residues 11-30 the composition is skewed to pro residues; sequence PPDADPANEPPPPGPMPPAP. Over residues 32-47 the composition is skewed to gly residues; the sequence is RGGGVGVGGGGTGVGG. The segment covering 63–75 has biased composition (pro residues); sequence ASPPPQGPLPGPP. S64 is modified (phosphoserine). The span at 84–97 shows a compositional bias: low complexity; that stretch reads AVPPGAVAGPRPQQ. A Phosphoserine modification is found at S165. At Y175 the chain carries Phosphotyrosine. Phosphoserine is present on S177. T195 is subject to Phosphothreonine. An OTU domain is found at 213 to 341; that stretch reads FIIKQMKEDG…NIHYNSVVNP (129 aa). Positions 218 to 224 are cys-loop; sequence MKEDGAC. The active site involves D221. The active-site Nucleophile is the C224. Positions 273–283 are variable-loop; it reads KRKNNCHGNHI. S328 carries the post-translational modification Phosphoserine; by MTOR. The his-loop stretch occupies residues 329-334; that stretch reads YHRNIH. H334 is a catalytic residue. 2 positions are modified to phosphoserine: S337 and S375. Residues 418-502 form a disordered region; the sequence is ARQVRGPSQP…PGTSSQFSAG (85 aa). Composition is skewed to low complexity over residues 430–443 and 450–462; these read ASAT…AASS and SRSP…ASSP. S452 carries the post-translational modification Phosphoserine. T507 carries the post-translational modification Phosphothreonine. The residue at position 508 (S508) is a Phosphoserine; by MTOR.

This sequence belongs to the peptidase C85 family. As to quaternary structure, interacts with TRAF3. Phosphorylation at Ser-177 is required for deubiquitinating activity. Phosphorylation at Ser-328, Ser-337 and Ser-508 by MTOR promotes its activity. As to expression, expressed in various tissues, including the liver and placenta, as well as in peripheral blood leukocytes.

The protein localises to the nucleus. The catalysed reaction is Thiol-dependent hydrolysis of ester, thioester, amide, peptide and isopeptide bonds formed by the C-terminal Gly of ubiquitin (a 76-residue protein attached to proteins as an intracellular targeting signal).. With respect to regulation, inhibited by N-ethyl-maleimide (NEM). In terms of biological role, deubiquitinating enzyme that functions as a negative regulator of the innate immune system. Has peptidase activity towards 'Lys-48'- and 'Lys-63'-linked polyubiquitin chains. Can also cleave 'Lys-11'-linked ubiquitin chains (in vitro). Acts via TRAF3 deubiquitination and subsequent suppression of type I interferon (IFN) production. Controls neuroectodermal differentiation through cleaving 'Lys-48'-linked ubiquitin chains to counteract degradation of select chromatin regulators such as ARID1A, HDAC2 and HCF1. Acts as a positive regulator of mTORC1 and mTORC2 signaling following phosphorylation by MTOR: acts by mediating deubiquitination of BTRC, leading to its stability. The polypeptide is OTU domain-containing protein 5 (Homo sapiens (Human)).